The primary structure comprises 355 residues: MFEAVTPLLDEHAELERRLADPAVHADAALARTLGRRYAELGAVVVAHAAWRAAADDAEAARELAAEDAAFAAELPALQRAAEEAGEKLRRLLLPRDPDDSRDVILEIKAGEGGEESALFAGDLLRMYLRYAERHGWVTEVLDANPSDLGGYKDVSVAVKTRGAAAEGVWHRLKYEGGVHRVQRVPVTESQGRVHTSAVGVLVVPEAEEVEVAVDPNDLRVDVFRSSGPGGQSVNTTDSAVRITHLPTGVVATCQNEKSQLQNREQAMRILRARLHALAQEAADAQASAARRSQVRTVDRSERVRTYNYGENRIADHRTGFKAYNLDTVLDGDLDPVIQSAIDADEAAQLAATSV.

Gln232 is subject to N5-methylglutamine.

The protein belongs to the prokaryotic/mitochondrial release factor family. Methylated by PrmC. Methylation increases the termination efficiency of RF1.

Its subcellular location is the cytoplasm. Peptide chain release factor 1 directs the termination of translation in response to the peptide chain termination codons UAG and UAA. In Kineococcus radiotolerans (strain ATCC BAA-149 / DSM 14245 / SRS30216), this protein is Peptide chain release factor 1.